A 428-amino-acid chain; its full sequence is Elongation factor 1-alpha (428 aa).

The tr-type G domain occupies 5–217 (KPHVNIVFIG…DQIPEPEKPT (213 aa)). A G1 region spans residues 14 to 21 (GHVDHGKS). 14-21 (GHVDHGKS) contributes to the GTP binding site. Mg(2+) is bound at residue Ser21. The G2 stretch occupies residues 68-72 (GITID). The interval 89–92 (DAPG) is G3. Residues 89–93 (DAPGH) and 144–147 (NKMD) each bind GTP. Residues 144 to 147 (NKMD) form a G4 region. A G5 region spans residues 181–183 (SAW).

The protein belongs to the TRAFAC class translation factor GTPase superfamily. Classic translation factor GTPase family. EF-Tu/EF-1A subfamily.

It localises to the cytoplasm. It carries out the reaction GTP + H2O = GDP + phosphate + H(+). GTP hydrolase that promotes the GTP-dependent binding of aminoacyl-tRNA to the A-site of ribosomes during protein biosynthesis. This chain is Elongation factor 1-alpha, found in Thermococcus sibiricus (strain DSM 12597 / MM 739).